Here is a 268-residue protein sequence, read N- to C-terminus: Tryptophan synthase alpha chain (268 aa).

Catalysis depends on proton acceptor residues E49 and D60.

Belongs to the TrpA family. As to quaternary structure, tetramer of two alpha and two beta chains.

It carries out the reaction (1S,2R)-1-C-(indol-3-yl)glycerol 3-phosphate + L-serine = D-glyceraldehyde 3-phosphate + L-tryptophan + H2O. The protein operates within amino-acid biosynthesis; L-tryptophan biosynthesis; L-tryptophan from chorismate: step 5/5. Functionally, the alpha subunit is responsible for the aldol cleavage of indoleglycerol phosphate to indole and glyceraldehyde 3-phosphate. The chain is Tryptophan synthase alpha chain from Salmonella paratyphi A (strain ATCC 9150 / SARB42).